An 89-amino-acid polypeptide reads, in one-letter code: Small ribosomal subunit protein uS15 (89 aa).

Residues 1-23 are disordered; that stretch reads MTLNTEAKQKIINKHQTHGTDTG.

It belongs to the universal ribosomal protein uS15 family. In terms of assembly, part of the 30S ribosomal subunit. Forms a bridge to the 50S subunit in the 70S ribosome, contacting the 23S rRNA.

Its function is as follows. One of the primary rRNA binding proteins, it binds directly to 16S rRNA where it helps nucleate assembly of the platform of the 30S subunit by binding and bridging several RNA helices of the 16S rRNA. Functionally, forms an intersubunit bridge (bridge B4) with the 23S rRNA of the 50S subunit in the ribosome. This chain is Small ribosomal subunit protein uS15, found in Prochlorococcus marinus (strain SARG / CCMP1375 / SS120).